Reading from the N-terminus, the 180-residue chain is Ribulose bisphosphate carboxylase small subunit, chloroplastic (180 aa).

Residues 1–56 (MASSVLSSAAVATRSNVAQANMVAPFTGLKSAASFPVSRKQNLDITSIASNGGRVQ) constitute a chloroplast transit peptide.

This sequence belongs to the RuBisCO small chain family. As to quaternary structure, heterohexadecamer of 8 large and 8 small subunits. In terms of assembly, (Microbial infection) Binds to tobamovirus movement protein at the plasmodesmata (e.g. tomato mosaic virus MP AC P69513); this interaction seems required for viral systemic movement.

The protein resides in the plastid. It localises to the chloroplast. Its subcellular location is the cell junction. It is found in the plasmodesma. Its function is as follows. RuBisCO catalyzes two reactions: the carboxylation of D-ribulose 1,5-bisphosphate, the primary event in carbon dioxide fixation, as well as the oxidative fragmentation of the pentose substrate. Both reactions occur simultaneously and in competition at the same active site. Although the small subunit is not catalytic it is essential for maximal activity. Involved in antiviral defenses. (Microbial infection) Required for tobamovirus movement (e.g. tobacco mosaic virus (TMV)). This is Ribulose bisphosphate carboxylase small subunit, chloroplastic from Nicotiana benthamiana.